An 86-amino-acid polypeptide reads, in one-letter code: Anti-adapter protein IraP (86 aa).

Positions 1 to 36 (MKNLIAELLLKLAQKEEESKELCAQVEALEIIVTAM) form a coiled coil.

It belongs to the IraP family. As to quaternary structure, interacts with RssB.

It localises to the cytoplasm. Inhibits RpoS proteolysis by regulating RssB activity, thereby increasing the stability of the sigma stress factor RpoS especially during phosphate starvation, but also in stationary phase and during nitrogen starvation. Its effect on RpoS stability is due to its interaction with RssB, which probably blocks the interaction of RssB with RpoS, and the consequent delivery of the RssB-RpoS complex to the ClpXP protein degradation pathway. The polypeptide is Anti-adapter protein IraP (Shigella boydii serotype 18 (strain CDC 3083-94 / BS512)).